Consider the following 658-residue polypeptide: DNA mismatch repair protein MutL (658 aa).

Residues Arg-114–Lys-130 are compositionally biased toward basic and acidic residues. Disordered stretches follow at residues Arg-114–Ala-138 and Pro-355–Ser-405.

The protein belongs to the DNA mismatch repair MutL/HexB family.

Functionally, this protein is involved in the repair of mismatches in DNA. It is required for dam-dependent methyl-directed DNA mismatch repair. May act as a 'molecular matchmaker', a protein that promotes the formation of a stable complex between two or more DNA-binding proteins in an ATP-dependent manner without itself being part of a final effector complex. In Neisseria gonorrhoeae (strain ATCC 700825 / FA 1090), this protein is DNA mismatch repair protein MutL.